The sequence spans 180 residues: Ribosome maturation factor RimM (180 aa).

One can recognise a PRC barrel domain in the interval 99–179 (NNEYYWKDIV…IVIKNWKQTF (81 aa)).

Belongs to the RimM family. In terms of assembly, binds ribosomal protein uS19.

The protein resides in the cytoplasm. In terms of biological role, an accessory protein needed during the final step in the assembly of 30S ribosomal subunit, possibly for assembly of the head region. Essential for efficient processing of 16S rRNA. May be needed both before and after RbfA during the maturation of 16S rRNA. It has affinity for free ribosomal 30S subunits but not for 70S ribosomes. The protein is Ribosome maturation factor RimM of Buchnera aphidicola subsp. Baizongia pistaciae (strain Bp).